A 466-amino-acid polypeptide reads, in one-letter code: Glutamate--tRNA ligase 1 (466 aa).

Positions 9-19 (PSPTGYLHIGG) match the 'HIGH' region motif. Cys-98, Cys-100, Cys-125, and Glu-127 together coordinate Zn(2+). The 'KMSKS' region motif lies at 236-240 (KLSKR). Lys-239 contacts ATP.

Belongs to the class-I aminoacyl-tRNA synthetase family. Glutamate--tRNA ligase type 1 subfamily. Monomer. It depends on Zn(2+) as a cofactor.

It is found in the cytoplasm. The enzyme catalyses tRNA(Glu) + L-glutamate + ATP = L-glutamyl-tRNA(Glu) + AMP + diphosphate. Functionally, catalyzes the attachment of glutamate to tRNA(Glu) in a two-step reaction: glutamate is first activated by ATP to form Glu-AMP and then transferred to the acceptor end of tRNA(Glu). The protein is Glutamate--tRNA ligase 1 of Acidithiobacillus ferrooxidans (strain ATCC 53993 / BNL-5-31) (Leptospirillum ferrooxidans (ATCC 53993)).